The following is a 290-amino-acid chain: Glycine--tRNA ligase alpha subunit (290 aa).

This sequence belongs to the class-II aminoacyl-tRNA synthetase family. Tetramer of two alpha and two beta subunits.

The protein localises to the cytoplasm. It carries out the reaction tRNA(Gly) + glycine + ATP = glycyl-tRNA(Gly) + AMP + diphosphate. The sequence is that of Glycine--tRNA ligase alpha subunit from Nitratiruptor sp. (strain SB155-2).